Consider the following 175-residue polypeptide: NAD(P)H-quinone oxidoreductase subunit I, chloroplastic (175 aa).

4Fe-4S ferredoxin-type domains are found at residues 55–84 and 95–124; these read GRIH…VNWE and QTYS…MTEE. [4Fe-4S] cluster contacts are provided by Cys64, Cys67, Cys70, Cys74, Cys104, Cys107, Cys110, and Cys114.

Belongs to the complex I 23 kDa subunit family. NDH is composed of at least 16 different subunits, 5 of which are encoded in the nucleus. The cofactor is [4Fe-4S] cluster.

The protein resides in the plastid. It localises to the chloroplast thylakoid membrane. The enzyme catalyses a plastoquinone + NADH + (n+1) H(+)(in) = a plastoquinol + NAD(+) + n H(+)(out). It catalyses the reaction a plastoquinone + NADPH + (n+1) H(+)(in) = a plastoquinol + NADP(+) + n H(+)(out). Its function is as follows. NDH shuttles electrons from NAD(P)H:plastoquinone, via FMN and iron-sulfur (Fe-S) centers, to quinones in the photosynthetic chain and possibly in a chloroplast respiratory chain. The immediate electron acceptor for the enzyme in this species is believed to be plastoquinone. Couples the redox reaction to proton translocation, and thus conserves the redox energy in a proton gradient. This chain is NAD(P)H-quinone oxidoreductase subunit I, chloroplastic, found in Chlorokybus atmophyticus (Soil alga).